Consider the following 179-residue polypeptide: ATP synthase subunit delta (179 aa).

The protein belongs to the ATPase delta chain family. F-type ATPases have 2 components, F(1) - the catalytic core - and F(0) - the membrane proton channel. F(1) has five subunits: alpha(3), beta(3), gamma(1), delta(1), epsilon(1). F(0) has three main subunits: a(1), b(2) and c(10-14). The alpha and beta chains form an alternating ring which encloses part of the gamma chain. F(1) is attached to F(0) by a central stalk formed by the gamma and epsilon chains, while a peripheral stalk is formed by the delta and b chains.

The protein resides in the cell inner membrane. Its function is as follows. F(1)F(0) ATP synthase produces ATP from ADP in the presence of a proton or sodium gradient. F-type ATPases consist of two structural domains, F(1) containing the extramembraneous catalytic core and F(0) containing the membrane proton channel, linked together by a central stalk and a peripheral stalk. During catalysis, ATP synthesis in the catalytic domain of F(1) is coupled via a rotary mechanism of the central stalk subunits to proton translocation. In terms of biological role, this protein is part of the stalk that links CF(0) to CF(1). It either transmits conformational changes from CF(0) to CF(1) or is implicated in proton conduction. This Cupriavidus pinatubonensis (strain JMP 134 / LMG 1197) (Cupriavidus necator (strain JMP 134)) protein is ATP synthase subunit delta.